A 424-amino-acid chain; its full sequence is MSKQLQARRLEGIDHNPWVEFTRLSKEYDVVNLGQGFPDFSPPDFAVQAFQQATTGNFMLNQYTSAFGYPPLTKILASFFGKLLGQEMDPLKNVLVTVGAYGALFTAFQALVDEGDEVIIIEPAFNCYEPMTMMAGGRPVFVSLRLSPAPKGQLGSSNDWQLDPTELASKFTPRTKILVLNTPNNPLGKVFSKKELELVAALCQQHDVLCFSDEVYQWLVYDGHQHISIASLPGMWERTLTIGSAGKSFSATGWKVGWVMGPDNIMKHLRTVHQNSIFHCPTQAQAAVAQCFEREQQHFGQPSSYFLQLPQAMGLNRDHMIQSLQSVGLKPLIPQGSYFLIADISDFKSSMPDLPGAMDEPYDTRFAKWMIKNKGLSAIPVSTFYSQPHHKDFDHYIRFCFVKDKATLQAMDKRLCSWKGEPQA.

Glycine 36 lines the substrate pocket. Lysine 82 bears the N6-succinyllysine mark. Asparagine 185 serves as a coordination point for substrate. Position 247 is an N6-(pyridoxal phosphate)lysine (lysine 247). Arginine 398 lines the substrate pocket. Lysine 413 bears the N6-succinyllysine mark.

It belongs to the class-I pyridoxal-phosphate-dependent aminotransferase family. Homodimer. The cofactor is pyridoxal 5'-phosphate.

It is found in the cytoplasm. It localises to the cytosol. It carries out the reaction L-kynurenine + 2-oxoglutarate = kynurenate + L-glutamate + H2O. The catalysed reaction is 3-phenylpyruvate + L-glutamine = 2-oxoglutaramate + L-phenylalanine. It catalyses the reaction an S-substituted L-cysteine + H2O = a thiol + pyruvate + NH4(+). The protein operates within amino-acid degradation; L-kynurenine degradation; kynurenate from L-kynurenine: step 1/2. In terms of biological role, catalyzes the irreversible transamination of the L-tryptophan metabolite L-kynurenine to form kynurenic acid (KA), an intermediate in the tryptophan catabolic pathway which is also a broad spectrum antagonist of the three ionotropic excitatory amino acid receptors among others. Metabolizes the cysteine conjugates of certain halogenated alkenes and alkanes to form reactive metabolites. Catalyzes the beta-elimination of S-conjugates and Se-conjugates of L-(seleno)cysteine, resulting in the cleavage of the C-S or C-Se bond. The polypeptide is Kynurenine--oxoglutarate transaminase 1 (Kyat1) (Mus musculus (Mouse)).